A 93-amino-acid polypeptide reads, in one-letter code: MLTAVYKSKKKADSFLFVEKRDDFTKVPEPLMAMFGQPKYVMLINLAKRAMLGTADLETVKAALTEKGYYLQIPPPQENLLSQLRKENGADND.

The YcgL domain maps to 1 to 85 (MLTAVYKSKK…PQENLLSQLR (85 aa)).

The sequence is that of YcgL domain-containing protein PSHAb0508 from Pseudoalteromonas translucida (strain TAC 125).